The chain runs to 146 residues: Hemoglobin subunit beta (146 aa).

Valine 1 carries the post-translational modification N-acetylvaline. The region spanning 2-146 (HLTGEEKAAV…VANALAHKYH (145 aa)) is the Globin domain. Threonine 12 is modified (phosphothreonine). Serine 44 carries the post-translational modification Phosphoserine. The residue at position 59 (lysine 59) is an N6-acetyllysine. Histidine 63 contributes to the heme b binding site. Position 82 is an N6-acetyllysine (lysine 82). Histidine 92 provides a ligand contact to heme b. Residue cysteine 93 is modified to S-nitrosocysteine. Lysine 144 is subject to N6-acetyllysine.

Belongs to the globin family. As to quaternary structure, heterotetramer of two alpha chains and two beta chains. Red blood cells.

In terms of biological role, involved in oxygen transport from the lung to the various peripheral tissues. The protein is Hemoglobin subunit beta (HBB) of Martes foina (Beech marten).